The following is a 298-amino-acid chain: MTDNDSEYIRQTEATRVRVLSEALPYIQQFAGRTVVVKYGGAAMKDSTLKDKVIRDIVFLSCVGLRPIVVHGGGPEINSWLDKLGIEPQFKNGLRVTDAATMDVVEMVLVGRVNKEIVALINQAGGLAVGLCGKDGNLFTARPQGQEGIGFVGEVSNVNIKILDTLASNGYIPVVSSVAADETGQAYNINADTVAGEIAAALGAEKLILLTDTSGILKDYKDQSTLIPKVDIREARELIVNGIVTGGMIPKVNCCVRSLAQGVRAAHIIDGRIPHALLLEIFTDVGIGTMILGSQFTS.

Residues 73–74 (GG), Arg-95, and Asn-188 contribute to the substrate site.

The protein belongs to the acetylglutamate kinase family. ArgB subfamily.

It is found in the cytoplasm. The catalysed reaction is N-acetyl-L-glutamate + ATP = N-acetyl-L-glutamyl 5-phosphate + ADP. Its pathway is amino-acid biosynthesis; L-arginine biosynthesis; N(2)-acetyl-L-ornithine from L-glutamate: step 2/4. Its function is as follows. Catalyzes the ATP-dependent phosphorylation of N-acetyl-L-glutamate. This chain is Acetylglutamate kinase, found in Nostoc punctiforme (strain ATCC 29133 / PCC 73102).